We begin with the raw amino-acid sequence, 249 residues long: ATP synthase subunit a (249 aa).

6 helical membrane passes run 30-50, 84-104, 113-133, 143-163, 196-216, and 221-241; these read SAYM…GSAG, FFPL…VGII, HIIV…IYGF, IFVP…IEVF, LLAG…GMVV, and LELL…CIYL.

Belongs to the ATPase A chain family. As to quaternary structure, F-type ATPases have 2 components, CF(1) - the catalytic core - and CF(0) - the membrane proton channel. CF(1) has five subunits: alpha(3), beta(3), gamma(1), delta(1), epsilon(1). CF(0) has four main subunits: a, b, b' and c.

The protein resides in the cell inner membrane. In terms of biological role, key component of the proton channel; it plays a direct role in the translocation of protons across the membrane. The protein is ATP synthase subunit a of Rhodopseudomonas palustris (strain BisA53).